Consider the following 117-residue polypeptide: Large ribosomal subunit protein bL19 (117 aa).

This sequence belongs to the bacterial ribosomal protein bL19 family.

Its function is as follows. This protein is located at the 30S-50S ribosomal subunit interface and may play a role in the structure and function of the aminoacyl-tRNA binding site. The protein is Large ribosomal subunit protein bL19 of Paenarthrobacter aurescens (strain TC1).